A 291-amino-acid chain; its full sequence is HTH-type transcriptional regulator CitR (291 aa).

Residues 1-58 (MDFKWLHTFVTAAKYENFRKTAETLFLSQPTVTVHIKQLEKEISCKLFERKGRQIQLT) form the HTH lysR-type domain. A DNA-binding region (H-T-H motif) is located at residues 18–37 (FRKTAETLFLSQPTVTVHIK).

This sequence belongs to the LysR transcriptional regulatory family.

Its subcellular location is the cytoplasm. Its function is as follows. Negative regulatory protein for the citA gene for citrate synthase I. This Bacillus subtilis (strain 168) protein is HTH-type transcriptional regulator CitR (citR).